We begin with the raw amino-acid sequence, 215 residues long: Osteoclast-stimulating factor 1 (215 aa).

The residue at position 2 (Ser-2) is an N-acetylserine. An SH3 domain is found at 12-71 (GQVKVFRALYTFEPRTPDELYFEEGDIIYITDMSDTSWWKGTCKGRTGLIPSNYVAEQAE). 3 ANK repeats span residues 72–101 (SIDN…GVNG), 105–135 (AGST…ELNQ), and 139–168 (LGDT…RTDL). The tract at residues 192–215 (KQQGTDGARTLSNAEDYLDDEDSD) is disordered. Residue Thr-201 is modified to Phosphothreonine. Ser-203 and Ser-214 each carry phosphoserine.

As to quaternary structure, interacts with C-SRC and SMN1. Interacts with FASLG.

It is found in the cytoplasm. Induces bone resorption, acting probably through a signaling cascade which results in the secretion of factor(s) enhancing osteoclast formation and activity. This is Osteoclast-stimulating factor 1 (Ostf1) from Mus musculus (Mouse).